The sequence spans 253 residues: Triosephosphate isomerase (253 aa).

8–10 (NWK) contacts substrate. H93 functions as the Electrophile in the catalytic mechanism. The active-site Proton acceptor is E165. Substrate contacts are provided by residues G171, S210, and 231–232 (GG).

The protein belongs to the triosephosphate isomerase family. Homodimer.

The protein localises to the cytoplasm. It carries out the reaction D-glyceraldehyde 3-phosphate = dihydroxyacetone phosphate. It participates in carbohydrate biosynthesis; gluconeogenesis. Its pathway is carbohydrate degradation; glycolysis; D-glyceraldehyde 3-phosphate from glycerone phosphate: step 1/1. Involved in the gluconeogenesis. Catalyzes stereospecifically the conversion of dihydroxyacetone phosphate (DHAP) to D-glyceraldehyde-3-phosphate (G3P). In Francisella tularensis subsp. novicida (strain U112), this protein is Triosephosphate isomerase.